Consider the following 605-residue polypeptide: SET domain-containing protein SNOG_11806 (605 aa).

Residues 68–132 (TLDLTGMKTP…SRKGTGGLRV (65 aa)) form a disordered region. The segment covering 75-89 (KTPQPSRSPTVTRNV) has biased composition (polar residues). Positions 104–115 (ESADDDDDDLQD) are enriched in acidic residues. In terms of domain architecture, SET spans 473-579 (PPVQIYRTAE…AGSEITVDYG (107 aa)).

This sequence belongs to the class V-like SAM-binding methyltransferase superfamily.

The protein is SET domain-containing protein SNOG_11806 of Phaeosphaeria nodorum (strain SN15 / ATCC MYA-4574 / FGSC 10173) (Glume blotch fungus).